We begin with the raw amino-acid sequence, 400 residues long: Pectinesterase B (400 aa).

Substrate contacts are provided by T171 and Q205. Residue D228 is the Proton donor of the active site. Catalysis depends on D261, which acts as the Nucleophile. Substrate is bound by residues R325 and W327.

It belongs to the pectinesterase family.

The enzyme catalyses [(1-&gt;4)-alpha-D-galacturonosyl methyl ester](n) + n H2O = [(1-&gt;4)-alpha-D-galacturonosyl](n) + n methanol + n H(+). Its pathway is glycan metabolism; pectin degradation; 2-dehydro-3-deoxy-D-gluconate from pectin: step 1/5. The polypeptide is Pectinesterase B (pemB) (Pectobacterium parmentieri).